The following is a 320-amino-acid chain: Ribosomal RNA large subunit methyltransferase F (320 aa).

The interval 1 to 20 is disordered; it reads MHKSANSKTRKQSKGLHPRN.

This sequence belongs to the methyltransferase superfamily. METTL16/RlmF family.

The protein resides in the cytoplasm. The catalysed reaction is adenosine(1618) in 23S rRNA + S-adenosyl-L-methionine = N(6)-methyladenosine(1618) in 23S rRNA + S-adenosyl-L-homocysteine + H(+). Specifically methylates the adenine in position 1618 of 23S rRNA. The sequence is that of Ribosomal RNA large subunit methyltransferase F from Saccharophagus degradans (strain 2-40 / ATCC 43961 / DSM 17024).